We begin with the raw amino-acid sequence, 279 residues long: Dehydrogenase/reductase SDR family member 4 (279 aa).

Residue 37-61 (LVTASTDGIGLAIARRLAQDGAHVV) participates in NADP(+) binding. Lys93 is subject to N6-acetyllysine; alternate. At Lys93 the chain carries N6-succinyllysine; alternate. Ser170 contacts substrate. The active-site Proton acceptor is the Tyr183. Lys187 is an NADP(+) binding site. Lys217 is modified (N6-acetyllysine; alternate). At Lys217 the chain carries N6-succinyllysine; alternate. Ser221 carries the post-translational modification Phosphoserine. N6-succinyllysine is present on residues Lys228 and Lys235. The Peroxisomal targeting signal motif lies at 277–279 (SRL).

Belongs to the short-chain dehydrogenases/reductases (SDR) family. In terms of assembly, homotetramer. In terms of tissue distribution, detected in heart, kidney, liver and small intestine. Detected at lower levels in brain, lung, stomach and spleen.

The protein resides in the peroxisome. It carries out the reaction a secondary alcohol + NADP(+) = a ketone + NADPH + H(+). The catalysed reaction is 3alpha-hydroxy-5beta-pregnan-20-one + NADP(+) = 5beta-pregnan-3,20-dione + NADPH + H(+). The enzyme catalyses 5beta-dihydrotestosterone + NADPH + H(+) = 5beta-androstane-3alpha,17beta-diol + NADP(+). It catalyses the reaction all-trans-retinol + NADP(+) = all-trans-retinal + NADPH + H(+). It carries out the reaction isatin + NADPH + H(+) = 3-hydroxyindolin-2-one + NADP(+). Inhibited by kaempferol, quercetin, genistein and myristic acid. Functionally, NADPH-dependent oxidoreductase which catalyzes the reduction of a variety of compounds bearing carbonyl groups including ketosteroids, alpha-dicarbonyl compounds, aldehydes, aromatic ketones and quinones. Reduces all-trans-retinal and 9-cis retinal. Reduces 3-ketosteroids and benzil into 3alpha-hydroxysteroids and S-benzoin, respectively, in contrast to the stereoselectivity of primates DHRS4s which produce 3beta-hydroxysteroids and R-benzoin. In the reverse reaction, catalyzes the NADP-dependent oxidation of 3alpha-hydroxysteroids and alcohol, but with much lower efficiency. Involved in the metabolism of 3alpha-hydroxysteroids, retinoid, isatin and xenobiotic carbonyl compounds. In Sus scrofa (Pig), this protein is Dehydrogenase/reductase SDR family member 4 (DHRS4).